The primary structure comprises 178 residues: Translation initiation factor IF-3 (178 aa).

This sequence belongs to the IF-3 family. In terms of assembly, monomer.

It is found in the cytoplasm. Functionally, IF-3 binds to the 30S ribosomal subunit and shifts the equilibrium between 70S ribosomes and their 50S and 30S subunits in favor of the free subunits, thus enhancing the availability of 30S subunits on which protein synthesis initiation begins. The sequence is that of Translation initiation factor IF-3 from Legionella pneumophila (strain Paris).